Reading from the N-terminus, the 336-residue chain is 3-isopropylmalate dehydrogenase (336 aa).

Residues arginine 87, arginine 97, arginine 121, and aspartate 211 each coordinate substrate. Residues aspartate 211, aspartate 235, and aspartate 239 each coordinate Mg(2+). NAD(+) is bound at residue glycine 271 to aspartate 283.

It belongs to the isocitrate and isopropylmalate dehydrogenases family. LeuB type 2 subfamily. As to quaternary structure, homodimer. Requires Mg(2+) as cofactor. Mn(2+) serves as cofactor.

Its subcellular location is the cytoplasm. It catalyses the reaction (2R,3S)-3-isopropylmalate + NAD(+) = 4-methyl-2-oxopentanoate + CO2 + NADH. It functions in the pathway amino-acid biosynthesis; L-leucine biosynthesis; L-leucine from 3-methyl-2-oxobutanoate: step 3/4. Functionally, catalyzes the oxidation of 3-carboxy-2-hydroxy-4-methylpentanoate (3-isopropylmalate) to 3-carboxy-4-methyl-2-oxopentanoate. The product decarboxylates to 4-methyl-2 oxopentanoate. The chain is 3-isopropylmalate dehydrogenase from Mycobacterium sp. (strain JLS).